Here is a 92-residue protein sequence, read N- to C-terminus: cAMP-dependent protein kinase inhibitor beta (92 aa).

The segment at 1 to 26 (MGGGTSPEAQQDSVMRTDSSEMTDVE) is disordered. The segment covering 7–26 (PEAQQDSVMRTDSSEMTDVE) has biased composition (polar residues). The residue at position 56 (S56) is a Phosphoserine. Positions 70–82 (EDAKTKNEEKDQG) are enriched in basic and acidic residues. The disordered stretch occupies residues 70–92 (EDAKTKNEEKDQGQPKTPLNEGK).

This sequence belongs to the PKI family.

In terms of biological role, extremely potent competitive inhibitor of cAMP-dependent protein kinase activity, this protein interacts with the catalytic subunit of the enzyme after the cAMP-induced dissociation of its regulatory chains. This Mus musculus (Mouse) protein is cAMP-dependent protein kinase inhibitor beta (Pkib).